A 291-amino-acid chain; its full sequence is 4-diphosphocytidyl-2-C-methyl-D-erythritol kinase (291 aa).

The active site involves Lys-11. 95–105 contributes to the ATP binding site; that stretch reads PVAAGLAGGSS. The active site involves Asp-137.

It belongs to the GHMP kinase family. IspE subfamily.

The catalysed reaction is 4-CDP-2-C-methyl-D-erythritol + ATP = 4-CDP-2-C-methyl-D-erythritol 2-phosphate + ADP + H(+). Its pathway is isoprenoid biosynthesis; isopentenyl diphosphate biosynthesis via DXP pathway; isopentenyl diphosphate from 1-deoxy-D-xylulose 5-phosphate: step 3/6. Catalyzes the phosphorylation of the position 2 hydroxy group of 4-diphosphocytidyl-2C-methyl-D-erythritol. This is 4-diphosphocytidyl-2-C-methyl-D-erythritol kinase from Alkaliphilus metalliredigens (strain QYMF).